A 376-amino-acid polypeptide reads, in one-letter code: Chaperone protein DnaJ (376 aa).

Positions 5–70 (DYYEVLGVAR…QKRAAYDQFG (66 aa)) constitute a J domain. A CR-type zinc finger spans residues 134–212 (GTSVKIKVPT…CHGHGRVEET (79 aa)). Zn(2+) contacts are provided by Cys147, Cys150, Cys164, Cys167, Cys186, Cys189, Cys200, and Cys203. CXXCXGXG motif repeat units lie at residues 147–154 (CTNCGGSG), 164–171 (CNTCGGHG), 186–193 (CPTCRGQG), and 200–207 (CNKCHGHG).

Belongs to the DnaJ family. As to quaternary structure, homodimer. It depends on Zn(2+) as a cofactor.

It localises to the cytoplasm. Its function is as follows. Participates actively in the response to hyperosmotic and heat shock by preventing the aggregation of stress-denatured proteins and by disaggregating proteins, also in an autonomous, DnaK-independent fashion. Unfolded proteins bind initially to DnaJ; upon interaction with the DnaJ-bound protein, DnaK hydrolyzes its bound ATP, resulting in the formation of a stable complex. GrpE releases ADP from DnaK; ATP binding to DnaK triggers the release of the substrate protein, thus completing the reaction cycle. Several rounds of ATP-dependent interactions between DnaJ, DnaK and GrpE are required for fully efficient folding. Also involved, together with DnaK and GrpE, in the DNA replication of plasmids through activation of initiation proteins. This Teredinibacter turnerae (strain ATCC 39867 / T7901) protein is Chaperone protein DnaJ.